The primary structure comprises 146 residues: MMDIKEIREYLPHRYPFLLVDRVTELDIENKNIRAYKNVSVNEPFFNGHFPEHPIMPGVLIIEAMAQAAGILAFKMLDSKPSDGTLYYFVGSDKLRFRQPVLPGDQLVLEAKFLSSKRQIWKFECKATVDGKAVCSAEIICAERKL.

The active site involves His49.

The protein belongs to the thioester dehydratase family. FabZ subfamily.

The protein resides in the cytoplasm. It carries out the reaction a (3R)-hydroxyacyl-[ACP] = a (2E)-enoyl-[ACP] + H2O. Its function is as follows. Involved in unsaturated fatty acids biosynthesis. Catalyzes the dehydration of short chain beta-hydroxyacyl-ACPs and long chain saturated and unsaturated beta-hydroxyacyl-ACPs. The chain is 3-hydroxyacyl-[acyl-carrier-protein] dehydratase FabZ from Pseudomonas savastanoi pv. phaseolicola (strain 1448A / Race 6) (Pseudomonas syringae pv. phaseolicola (strain 1448A / Race 6)).